An 89-amino-acid polypeptide reads, in one-letter code: Small ribosomal subunit protein uS15 (89 aa).

It belongs to the universal ribosomal protein uS15 family. Part of the 30S ribosomal subunit. Forms a bridge to the 50S subunit in the 70S ribosome, contacting the 23S rRNA.

Functionally, one of the primary rRNA binding proteins, it binds directly to 16S rRNA where it helps nucleate assembly of the platform of the 30S subunit by binding and bridging several RNA helices of the 16S rRNA. Forms an intersubunit bridge (bridge B4) with the 23S rRNA of the 50S subunit in the ribosome. The polypeptide is Small ribosomal subunit protein uS15 (Janthinobacterium sp. (strain Marseille) (Minibacterium massiliensis)).